Consider the following 351-residue polypeptide: Protein RecA (351 aa).

Residue 67-74 (GPESSGKT) participates in ATP binding.

This sequence belongs to the RecA family.

It localises to the cytoplasm. Its function is as follows. Can catalyze the hydrolysis of ATP in the presence of single-stranded DNA, the ATP-dependent uptake of single-stranded DNA by duplex DNA, and the ATP-dependent hybridization of homologous single-stranded DNAs. It interacts with LexA causing its activation and leading to its autocatalytic cleavage. The polypeptide is Protein RecA (Arthrobacter sp. (strain FB24)).